The following is a 477-amino-acid chain: Homeobox protein Meis2 (477 aa).

The interval 71-191 (DALKRDKDAI…KMPIDLVIDE (121 aa)) is required for interaction with PBX1. In terms of domain architecture, MEIS N-terminal spans 110-193 (GGDVCSSDSF…PIDLVIDERD (84 aa)). Residues 193–203 (DGSSKSDHEEL) are compositionally biased toward basic and acidic residues. The segment at 193–283 (DGSSKSDHEE…KKRQKKRGIF (91 aa)) is disordered. 2 stretches are compositionally biased toward polar residues: residues 204-217 (SGSS…NPSS) and 239-251 (GHAS…SSEQ). Positions 276–338 (RQKKRGIFPK…NARRRIVQPM (63 aa)) form a DNA-binding region, homeobox; TALE-type. Residues 299-333 (LTHPYPSEEQKKQLAQDTGLTILQVNNWFINARRR) form an interaction with DNA region. The transcriptional activation domain stretch occupies residues 340 to 477 (DQSNRAGFLL…GGQVMDIHAQ (138 aa)).

This sequence belongs to the TALE/MEIS homeobox family. Monomer and homodimer. Heterodimer with HOXB13. Isoform 2 interacts with TLX1. Isoform 3 interacts with HOXA13 and PBX1 isoform PBX1b. Isoform 4 interacts with SP1, SP3 and KLF4. Isoform 4 and isoform 5 interact with PBX1 isoform PBX1a; the interaction partially relieves MEIS2 autoinhibition. Isoform 3 also known as MEIS2b is part of a PDX1:PBX1b:Meis2B complex; Meis2B is recruited by PBX1b and can be replaced by isoform 4 in a small fraction of complexes. Can form trimeric complexes including HOXB8 and PBX2 or PBX3. Expressed in various tissues. Expressed at high level in the lymphoid organs of hematopoietic tissues. Also expressed in some regions of the brain, such as the putamen.

The protein resides in the nucleus. Its subcellular location is the cytoplasm. The protein localises to the perinuclear region. In terms of biological role, involved in transcriptional regulation. Binds to HOX or PBX proteins to form dimers, or to a DNA-bound dimer of PBX and HOX proteins and thought to have a role in stabilization of the homeoprotein-DNA complex. Isoform 3 is required for the activity of a PDX1:PBX1b:MEIS2b complex in pancreatic acinar cells involved in the transcriptional activation of the ELA1 enhancer; the complex binds to the enhancer B element and cooperates with the transcription factor 1 complex (PTF1) bound to the enhancer A element; MEIS2 is not involved in complex DNA-binding. Probably in complex with PBX1, is involved in transcriptional regulation by KLF4. Isoform 3 and isoform 4 can bind to a EPHA8 promoter sequence containing the DNA motif 5'-CGGTCA-3'; in cooperation with a PBX protein (such as PBX2) is proposed to be involved in the transcriptional activation of EPHA8 in the developing midbrain. May be involved in regulation of myeloid differentiation. Can bind to the DNA sequence 5'-TGACAG-3'in the activator ACT sequence of the D(1A) dopamine receptor (DRD1) promoter and activate DRD1 transcription; isoform 5 cannot activate DRD1 transcription. This Homo sapiens (Human) protein is Homeobox protein Meis2 (MEIS2).